The chain runs to 186 residues: Ribosome-recycling factor (186 aa).

This sequence belongs to the RRF family.

The protein localises to the cytoplasm. In terms of biological role, responsible for the release of ribosomes from messenger RNA at the termination of protein biosynthesis. May increase the efficiency of translation by recycling ribosomes from one round of translation to another. This is Ribosome-recycling factor from Rickettsia massiliae (strain Mtu5).